The chain runs to 366 residues: Phospho-N-acetylmuramoyl-pentapeptide-transferase (366 aa).

The next 10 membrane-spanning stretches (helical) occupy residues 25–45 (AGAA…AIIN), 70–90 (GTPT…SLLW), 93–113 (LSNV…AIGF), 134–154 (LGIE…MALA), 174–194 (FVIN…VGAG), 205–225 (GLAI…AYLA), 245–265 (LAVI…FNAP), 268–288 (AIFM…SIAV), 297–317 (VIVG…VFWF), and 343–363 (QVVI…LATL).

Belongs to the glycosyltransferase 4 family. MraY subfamily. It depends on Mg(2+) as a cofactor.

It is found in the cell inner membrane. It carries out the reaction UDP-N-acetyl-alpha-D-muramoyl-L-alanyl-gamma-D-glutamyl-meso-2,6-diaminopimeloyl-D-alanyl-D-alanine + di-trans,octa-cis-undecaprenyl phosphate = di-trans,octa-cis-undecaprenyl diphospho-N-acetyl-alpha-D-muramoyl-L-alanyl-D-glutamyl-meso-2,6-diaminopimeloyl-D-alanyl-D-alanine + UMP. It functions in the pathway cell wall biogenesis; peptidoglycan biosynthesis. In terms of biological role, catalyzes the initial step of the lipid cycle reactions in the biosynthesis of the cell wall peptidoglycan: transfers peptidoglycan precursor phospho-MurNAc-pentapeptide from UDP-MurNAc-pentapeptide onto the lipid carrier undecaprenyl phosphate, yielding undecaprenyl-pyrophosphoryl-MurNAc-pentapeptide, known as lipid I. The sequence is that of Phospho-N-acetylmuramoyl-pentapeptide-transferase from Agrobacterium fabrum (strain C58 / ATCC 33970) (Agrobacterium tumefaciens (strain C58)).